A 765-amino-acid chain; its full sequence is Periplasmic beta-glucosidase (765 aa).

Residues 1-20 (MKWLCSVGIAVSLALQPALA) form the signal peptide. Residue Asp287 is part of the active site.

The protein belongs to the glycosyl hydrolase 3 family.

Its subcellular location is the periplasm. It carries out the reaction Hydrolysis of terminal, non-reducing beta-D-glucosyl residues with release of beta-D-glucose.. The protein is Periplasmic beta-glucosidase (bglX) of Escherichia coli (strain K12).